Reading from the N-terminus, the 269-residue chain is Tryptophan synthase alpha chain (269 aa).

Active-site proton acceptor residues include E49 and D60.

Belongs to the TrpA family. In terms of assembly, tetramer of two alpha and two beta chains.

The enzyme catalyses (1S,2R)-1-C-(indol-3-yl)glycerol 3-phosphate + L-serine = D-glyceraldehyde 3-phosphate + L-tryptophan + H2O. The protein operates within amino-acid biosynthesis; L-tryptophan biosynthesis; L-tryptophan from chorismate: step 5/5. The alpha subunit is responsible for the aldol cleavage of indoleglycerol phosphate to indole and glyceraldehyde 3-phosphate. The chain is Tryptophan synthase alpha chain from Pseudomonas putida (strain GB-1).